A 447-amino-acid polypeptide reads, in one-letter code: C4-dicarboxylate transport protein (447 aa).

A run of 9 helical transmembrane segments spans residues 13–33, 49–69, 81–101, 149–169, 189–209, 227–247, 302–322, 336–356, and 357–377; these read SLYF…HYWP, LIKM…IAGM, LALL…LLIV, AFAK…GFAL, VLFA…FGAM, LMGT…GLIA, GYSF…VFIA, TLLA…GSGF, and IVLA…LALI. The interval 422-447 is disordered; the sequence is ETEAEANEPEAVLDEIDQHMPVPAAR. Residues 425 to 436 show a composition bias toward acidic residues; the sequence is AEANEPEAVLDE.

It belongs to the dicarboxylate/amino acid:cation symporter (DAACS) (TC 2.A.23) family.

Its subcellular location is the cell inner membrane. Responsible for the transport of dicarboxylates such as succinate, fumarate, and malate from the periplasm across the membrane. The chain is C4-dicarboxylate transport protein from Leptothrix cholodnii (strain ATCC 51168 / LMG 8142 / SP-6) (Leptothrix discophora (strain SP-6)).